A 266-amino-acid polypeptide reads, in one-letter code: UPF0354 protein lin1649 (266 aa).

Belongs to the UPF0354 family.

This chain is UPF0354 protein lin1649, found in Listeria innocua serovar 6a (strain ATCC BAA-680 / CLIP 11262).